Here is a 1249-residue protein sequence, read N- to C-terminus: Myosin-1 (1249 aa).

Residues 1–42 (MGHSRRPAGGEKKSRGFGRSKAVADVGDGRQTGGKPQVKKAT) form a disordered region. A Myosin motor domain is found at 51-730 (IGVSDLTLLS…TLFALEAMRD (680 aa)). 144-151 (GESGAGKT) contributes to the ATP binding site. Phosphoserine is present on serine 372. Residues 419 to 501 (SIGILDIYGF…PGVFAALNDA (83 aa)) form an actin-binding region. IQ domains follow at residues 734–754 (HNMA…RTEC) and 755–780 (AIRI…QGHQ). Residues 788–978 (RRRMSLLGSR…TIHTGPGEPA (191 aa)) form the TH1 domain. 2 disordered regions span residues 962–1079 (DDSY…PKKP) and 1126–1249 (WTPE…DDDW). Positions 1021–1035 (AAQPLPRATPQPAEP) are enriched in pro residues. A compositionally biased stretch (low complexity) spans 1036-1051 (QPAARAVPQPVAAVAA). Composition is skewed to pro residues over residues 1064–1077 (APPP…PAPK) and 1139–1150 (TPKPAPPPPPAA). Residues 1076-1137 (PKKPTAKVLY…PEAYLEEQVA (62 aa)) enclose the SH3 domain. The span at 1151–1169 (PRSTPAPATNGAAAAAKAK) shows a compositional bias: low complexity. Residues 1200 to 1221 (VSMNSHDSSGGSGRGTPNSMSN) are compositionally biased toward polar residues. Over residues 1222–1231 (ASLAGGLAEA) the composition is skewed to low complexity.

The protein belongs to the TRAFAC class myosin-kinesin ATPase superfamily. Myosin family. Phosphorylation of the TEDS site (Ser-372) is required for the polarization of the actin cytoskeleton. Phosphorylation probably activates the myosin-I ATPase activity.

Its subcellular location is the cytoplasm. It is found in the cytoskeleton. It localises to the actin patch. In terms of biological role, type-I myosin implicated in the organization of the actin cytoskeleton. Required for proper actin cytoskeleton polarization. At the cell cortex, assembles in patch-like structures together with proteins from the actin-polymerizing machinery and promotes actin assembly. Functions as actin nucleation-promoting factor (NPF) for the Arp2/3 complex. Plays an important role in polarized growth, spore germination, hyphal morphogenesis, and septal wall formation. This Aspergillus fumigatus (strain ATCC MYA-4609 / CBS 101355 / FGSC A1100 / Af293) (Neosartorya fumigata) protein is Myosin-1 (myoA).